A 714-amino-acid polypeptide reads, in one-letter code: Polyribonucleotide nucleotidyltransferase (714 aa).

Mg(2+)-binding residues include Asp486 and Asp492. Residues 553 to 612 enclose the KH domain; it reads PRIITMKINPEKIRDVIGKGGAVIRALTEETGTTIDIEEDGTIKIGCTSAEAGEEAKKRI. One can recognise an S1 motif domain in the interval 622 to 690; it reads GQVYDGTVLK…DKGRVRLSAK (69 aa).

It belongs to the polyribonucleotide nucleotidyltransferase family. It depends on Mg(2+) as a cofactor.

It is found in the cytoplasm. The enzyme catalyses RNA(n+1) + phosphate = RNA(n) + a ribonucleoside 5'-diphosphate. In terms of biological role, involved in mRNA degradation. Catalyzes the phosphorolysis of single-stranded polyribonucleotides processively in the 3'- to 5'-direction. The protein is Polyribonucleotide nucleotidyltransferase of Methylobacillus flagellatus (strain ATCC 51484 / DSM 6875 / VKM B-1610 / KT).